Consider the following 294-residue polypeptide: uncharacterized protein (294 aa).

Residues 1 to 19 (MFKRSLFILLLLAASLVKA) form the signal peptide.

This is an uncharacterized protein from Rickettsia felis (strain ATCC VR-1525 / URRWXCal2) (Rickettsia azadi).